Here is a 59-residue protein sequence, read N- to C-terminus: Putative potassium channel toxin Ts22 (59 aa).

An N-terminal signal peptide occupies residues 1-22; it reads MKAFYGILIIFILISMIDLSQQ. Disulfide bonds link Cys29-Cys50, Cys35-Cys55, and Cys39-Cys57.

The protein belongs to the short scorpion toxin superfamily. Potassium channel inhibitor family. Alpha-KTx 04 subfamily. In terms of tissue distribution, expressed by the venom gland.

It is found in the secreted. In terms of biological role, potently blocks voltage-gated potassium channels (Kv). In Tityus serrulatus (Brazilian scorpion), this protein is Putative potassium channel toxin Ts22.